The sequence spans 247 residues: Small ribosomal subunit protein uS2 (247 aa).

The protein belongs to the universal ribosomal protein uS2 family.

This Fusobacterium nucleatum subsp. nucleatum (strain ATCC 25586 / DSM 15643 / BCRC 10681 / CIP 101130 / JCM 8532 / KCTC 2640 / LMG 13131 / VPI 4355) protein is Small ribosomal subunit protein uS2.